A 999-amino-acid polypeptide reads, in one-letter code: Probable basic-leucine zipper transcription factor N (999 aa).

Composition is skewed to low complexity over residues 1-79 (MYQS…YQQQ) and 88-126 (NNVNINNNNNNNVNINSQNNVNNNNNNNNNNNNGNINNN). Residues 1-126 (MYQSIPQQGN…NNNNGNINNN (126 aa)) form a disordered region. Coiled-coil stretches lie at residues 148-198 (QQQQ…MVLM) and 232-282 (GIQQ…QQIS). A compositionally biased stretch (polar residues) spans 286 to 302 (ESASPYYSTPIQSNTML). 3 disordered regions span residues 286–406 (ESAS…SQDQ), 450–533 (QQLH…PTIN), and 601–620 (EKQKTRRRASQNLASRNYRQ). The span at 303–347 (SIPSSPGIPSSIPQLNNSNNINNNSNNNNNNNNNNNNNNINYNSN) shows a compositional bias: low complexity. Positions 348-406 (MASNFISQHSNNGSNTSSPVPQTTYLQNSGGNFNAYNGSNTNSPITPSSYLQPTTSQDQ) are enriched in polar residues. A coiled-coil region spans residues 423–451 (IQQQQKILQQQQQQQLLLQQQIQQQQQQQ). Residues 450–517 (QQLHQPQSPQ…IIQPTTIQPQ (68 aa)) show a composition bias toward low complexity. The bZIP domain maps to 601–664 (EKQKTRRRAS…KKLLHENNIL (64 aa)). The tract at residues 602–632 (KQKTRRRASQNLASRNYRQRKKQYVNEVEDR) is basic motif. A leucine-zipper region spans residues 636 to 643 (IVQENERL). Disordered stretches follow at residues 665–711 (KSGG…VVET), 779–807 (QSCPFEDPSEKQHSDPNSSPIGDMPSPYE), and 870–899 (VNNGGNTKSKKTAASTSTTTTTTSTSTTTT). Residues 682–692 (SEDEDEDDFDQ) show a composition bias toward acidic residues. The stretch at 921 to 950 (HLVQLSGLLDKLKENIDHENETLIQTYEKL) forms a coiled coil.

It belongs to the bZIP family.

It localises to the nucleus. Probable transcriptional regulator. The sequence is that of Probable basic-leucine zipper transcription factor N (bzpN) from Dictyostelium discoideum (Social amoeba).